A 375-amino-acid polypeptide reads, in one-letter code: Homeobox protein Meis3 (375 aa).

Residues 25–51 form a disordered region; the sequence is PETVPAVPGPYGPHRPPQPLPPGLDSD. Residues 31-46 show a composition bias toward pro residues; it reads VPGPYGPHRPPQPLPP. The MEIS N-terminal domain occupies 96-179; that stretch reads GGDVCSSDSF…PIDLVIEDRD (84 aa). Disordered stretches follow at residues 197–268 and 329–348; these read PDQN…KRGI and NRTG…GGYT. The span at 227 to 241 shows a compositional bias: low complexity; it reads SQSGDNSSDQGDGLD. Residues 262 to 324 constitute a DNA-binding region (homeobox; TALE-type); that stretch reads RNKKRGIFPK…NARRRIVQPM (63 aa).

Belongs to the TALE/MEIS homeobox family.

It localises to the nucleus. Transcriptional regulator which directly modulates PDPK1 expression, thus promoting survival of pancreatic beta-cells. Also regulates expression of NDFIP1, BNIP3, and CCNG1. The chain is Homeobox protein Meis3 (MEIS3) from Homo sapiens (Human).